Here is a 689-residue protein sequence, read N- to C-terminus: Glycine--tRNA ligase beta subunit (689 aa).

The protein belongs to the class-II aminoacyl-tRNA synthetase family. Tetramer of two alpha and two beta subunits.

The protein resides in the cytoplasm. It carries out the reaction tRNA(Gly) + glycine + ATP = glycyl-tRNA(Gly) + AMP + diphosphate. This Escherichia coli (strain K12 / MC4100 / BW2952) protein is Glycine--tRNA ligase beta subunit.